The sequence spans 208 residues: Glutathione S-transferase GstB (208 aa).

The region spanning 1–83 (MITLWGRNNS…YLAAQYGQKR (83 aa)) is the GST N-terminal domain. Glutathione is bound by residues asparagine 12, asparagine 39, valine 53, and 67 to 68 (ES). A GST C-terminal domain is found at 88 to 208 (SPARRAEAEK…VRKVVMIPVS (121 aa)).

Belongs to the GST superfamily.

The enzyme catalyses RX + glutathione = an S-substituted glutathione + a halide anion + H(+). Conjugation of reduced glutathione to a wide number of exogenous and endogenous hydrophobic electrophiles. The protein is Glutathione S-transferase GstB (gstB) of Escherichia coli O6:H1 (strain CFT073 / ATCC 700928 / UPEC).